The chain runs to 875 residues: MDEEEDNLSLLTALLEENESALDCNSEENNFLTRENGEPDAFDELFDADGDGESYTEEADDGETGETRDEKENLATLFGDMEDLTDEEEVPASQSTENRVLPAPAPRREKTNEELQEELRNLQEQMKALQEQLKVTTIKQTASPARLQKSPVEKSPRPPLKERRVQRIQESTCFSAELDVPALPRTKRVARTPKASPPDPKSSSSRMTSAPSQPLQTISRNKPSGITRGQIVGTPGSSGETTQPICVEAFSGLRLRRPRVSSTEMNKKMTGRKLIRLSQIKEKMAREKLEEIDWVTFGVILKKVTPQSVNSGKTFSIWKLNDLRDLTQCVSLFLFGEVHKALWKTEQGTVVGILNANPMKPKDGSEEVCLSIDHPQKVLIMGEALDLGTCKAKKKNGEPCTQTVNLRDCEYCQYHVQAQYKKLSAKRADLQSTFSGGRIPKKFARRGTSLKERLCQDGFYYGGVSSASYAASIAAAVAPKKKIQTTLSNLVVKGTNLIIQETRQKLGIPQKSLSCSEEFKELMDLPTCGARNLKQHLAKATASGIMGSPKPAIKSISASALLKQQKQRMLEMRRRKSEEIQKRFLQSSSEVESPAVPSSSRQPPAQPPRTGSEFPRLEGAPATMTPKLGRGVLEGDDVLFYDESPPPRPKLSALAEAKKLAAITKLRAKGQVLTKTNPNSIKKKQKDPQDILEVKERVEKNTMFSSQAEDELEPARKKRREQLAYLESEEFQKILKAKSKHTGILKEAEAEMQERYFEPLVKKEQMEEKMRNIREVKCRVVTCKTCAYTHFKLLETCVSEQHEYHWHDGVKRFFKCPCGNRSISLDRLPNKHCSNCGLYKWERDGMLKEKTGPKIGGETLLPRGEEHAKFLNSLK.

An N-terminal domain region spans residues 1–156 (MDEEEDNLSL…LQKSPVEKSP (156 aa)). Disordered regions lie at residues 31-120 (FLTR…EELR), 137-167 (TIKQTASPARLQKSPVEKSPRPPLKERRVQR), and 179-228 (DVPA…GITR). Acidic residues-rich tracts occupy residues 38–64 (EPDAFDELFDADGDGESYTEEADDGET) and 80–90 (DMEDLTDEEEV). Phosphothreonine is present on threonine 85. Phosphoserine is present on serine 93. Residues 104-142 (PAPRREKTNEELQEELRNLQEQMKALQEQLKVTTIKQTA) are a coiled coil. Basic and acidic residues-rich tracts occupy residues 106-120 (PRREKTNEELQEELR) and 151-167 (PVEKSPRPPLKERRVQR). A compositionally biased stretch (polar residues) spans 206–224 (RMTSAPSQPLQTISRNKPS). Residues 238 to 389 (SGETTQPICV…IMGEALDLGT (152 aa)) are OB-fold domain. Positions 390-415 (CKAKKKNGEPCTQTVNLRDCEYCQYH) are zinc finger-like 1. Lysine 493 participates in a covalent cross-link: Glycyl lysine isopeptide (Lys-Gly) (interchain with G-Cter in SUMO2). The disordered stretch occupies residues 567-630 (QRMLEMRRRK…PATMTPKLGR (64 aa)). Residues 568 to 582 (RMLEMRRRKSEEIQK) show a composition bias toward basic and acidic residues. The segment covering 587–603 (SSSEVESPAVPSSSRQP) has biased composition (low complexity). Residue lysine 627 forms a Glycyl lysine isopeptide (Lys-Gly) (interchain with G-Cter in SUMO2) linkage. Serine 644 is modified (phosphoserine). Glycyl lysine isopeptide (Lys-Gly) (interchain with G-Cter in SUMO2) cross-links involve residues lysine 762 and lysine 763. Zinc finger-like stretches follow at residues 783–802 (CKTCAYTHFKLLETCVSEQH) and 816–836 (CPCGNRSISLDRLPNKHCSNC).

It belongs to the MCM10 family. In terms of assembly, self-associates. Interacts with ORC2. May interact with MCM2 and MCM6. Interacts with the DNA polymerase alpha subunit POLA1. Interacts with RECQL4; this interaction regulates RECQL4 unwinding activity. Interacts with WDHD1.

The protein resides in the nucleus. In terms of biological role, acts as a replication initiation factor that brings together the MCM2-7 helicase and the DNA polymerase alpha/primase complex in order to initiate DNA replication. Additionally, plays a role in preventing DNA damage during replication. Key effector of the RBBP6 and ZBTB38-mediated regulation of DNA-replication and common fragile sites stability; acts as a direct target of transcriptional repression by ZBTB38. The chain is Protein MCM10 homolog (MCM10) from Homo sapiens (Human).